Here is a 405-residue protein sequence, read N- to C-terminus: Opine dehydrogenase (405 aa).

This sequence belongs to the lysopine/nopaline/octopine/opine/vitopine dehydrogenases family.

This Haliotis discus hannai (Japanese abalone) protein is Opine dehydrogenase.